The sequence spans 161 residues: Protein-export protein SecB (161 aa).

The protein belongs to the SecB family. Homotetramer, a dimer of dimers. One homotetramer interacts with 1 SecA dimer.

The protein localises to the cytoplasm. Functionally, one of the proteins required for the normal export of preproteins out of the cell cytoplasm. It is a molecular chaperone that binds to a subset of precursor proteins, maintaining them in a translocation-competent state. It also specifically binds to its receptor SecA. This is Protein-export protein SecB from Shewanella pealeana (strain ATCC 700345 / ANG-SQ1).